The primary structure comprises 89 residues: Small ribosomal subunit protein uS15 (89 aa).

It belongs to the universal ribosomal protein uS15 family. In terms of assembly, part of the 30S ribosomal subunit. Forms a bridge to the 50S subunit in the 70S ribosome, contacting the 23S rRNA.

In terms of biological role, one of the primary rRNA binding proteins, it binds directly to 16S rRNA where it helps nucleate assembly of the platform of the 30S subunit by binding and bridging several RNA helices of the 16S rRNA. Its function is as follows. Forms an intersubunit bridge (bridge B4) with the 23S rRNA of the 50S subunit in the ribosome. The protein is Small ribosomal subunit protein uS15 of Leuconostoc mesenteroides subsp. mesenteroides (strain ATCC 8293 / DSM 20343 / BCRC 11652 / CCM 1803 / JCM 6124 / NCDO 523 / NBRC 100496 / NCIMB 8023 / NCTC 12954 / NRRL B-1118 / 37Y).